Here is a 300-residue protein sequence, read N- to C-terminus: ATP synthase gamma chain (300 aa).

Belongs to the ATPase gamma chain family. In terms of assembly, F-type ATPases have 2 components, CF(1) - the catalytic core - and CF(0) - the membrane proton channel. CF(1) has five subunits: alpha(3), beta(3), gamma(1), delta(1), epsilon(1). CF(0) has three main subunits: a, b and c.

It is found in the cell membrane. Its function is as follows. Produces ATP from ADP in the presence of a proton gradient across the membrane. The gamma chain is believed to be important in regulating ATPase activity and the flow of protons through the CF(0) complex. The chain is ATP synthase gamma chain from Acidothermus cellulolyticus (strain ATCC 43068 / DSM 8971 / 11B).